We begin with the raw amino-acid sequence, 390 residues long: 23S rRNA (uracil(747)-C(5))-methyltransferase RlmC (390 aa).

Residues Cys-12, Cys-20, Cys-23, and Cys-100 each coordinate [4Fe-4S] cluster. S-adenosyl-L-methionine-binding residues include Gln-225, Phe-254, Glu-275, and Asn-322. The active-site Nucleophile is Cys-349.

Belongs to the class I-like SAM-binding methyltransferase superfamily. RNA M5U methyltransferase family. RlmC subfamily.

The catalysed reaction is uridine(747) in 23S rRNA + S-adenosyl-L-methionine = 5-methyluridine(747) in 23S rRNA + S-adenosyl-L-homocysteine + H(+). Functionally, catalyzes the formation of 5-methyl-uridine at position 747 (m5U747) in 23S rRNA. The chain is 23S rRNA (uracil(747)-C(5))-methyltransferase RlmC from Shewanella baltica (strain OS223).